The primary structure comprises 353 residues: ATP-dependent (S)-NAD(P)H-hydrate dehydratase (353 aa).

The YjeF C-terminal domain occupies 18-345 (MLARVRQMVP…DEVHTAFLNL (328 aa)). The tract at residues 95 to 121 (RSSPPALSSSDSGSSPSRTKSAPDTDP) is disordered. The span at 96–114 (SSPPALSSSDSGSSPSRTK) shows a compositional bias: low complexity. (6S)-NADPHX contacts are provided by residues Gly143 and 196–202 (NVVEFGR). ATP-binding positions include 241 to 245 (KGAKD) and 260 to 269 (GGLKRSGGQG). Asp270 is a binding site for (6S)-NADPHX.

It belongs to the NnrD/CARKD family. Requires Mg(2+) as cofactor.

Its subcellular location is the cytoplasm. It catalyses the reaction (6S)-NADHX + ATP = ADP + phosphate + NADH + H(+). It carries out the reaction (6S)-NADPHX + ATP = ADP + phosphate + NADPH + H(+). Catalyzes the dehydration of the S-form of NAD(P)HX at the expense of ATP, which is converted to ADP. Together with NAD(P)HX epimerase, which catalyzes the epimerization of the S- and R-forms, the enzyme allows the repair of both epimers of NAD(P)HX, a damaged form of NAD(P)H that is a result of enzymatic or heat-dependent hydration. This Neurospora crassa (strain ATCC 24698 / 74-OR23-1A / CBS 708.71 / DSM 1257 / FGSC 987) protein is ATP-dependent (S)-NAD(P)H-hydrate dehydratase.